The chain runs to 657 residues: MQKASTSAGAKTAGNRKMQKSPNNGAAKAQKSAKTVDTVTDSELLYNPPAFLTAAEKERRKYLQARVRAEGESASTSSKSNATRPTDRKRHLQAEDPLPADANNNDTNKGGKVAQESASTQAAGTTKRKQPRSQGLEQTSPIMVNGEALACPLVRKSLPAAEAAKSCPLPSKKDSVTKSPMTVHEAPKVDSATSNSNEKQLATMPVDIHKTDSIEEGRRVLEWLINPVAVNQFFADFWENNACVVQRKNPNYYSKLMSFKMIDDILMRNRVEFGTNLDVTIYRNGKRETLNPEGRAFPSVVWDFYAEGCSIRILNPSTYLLGLRQVCSIMQEFFHCLVGANVYLTPPNSQGFAPHYDDIEAFVIQVEGRKRWRLYEPPEKADQLSRTSSGNYDQKQLGEPIIDEVLEAGDLLYFPRGTVHQAITEKGHFSLHITLSVYQQQAYANLLETLMPIVLKKAVKKSVALRRGLPLHTFHVLGEVQRTNRCESRDQLVENVQKLVSKYLMPSTQDIDEAVDQLAKKFQHEALPPIILPEEKVRTVFGSRSISDQEGNSVCDYEFDTDTSVRLLRANILRLVNEDDGSVKIYHHVNNALEYCKYEPNFLEILQEEAIAVEVLISAYPYYITVDQLPLKTVARKVEVATALWEHGLLMTEKPFK.

Disordered regions lie at residues 1–141 (MQKA…QTSP) and 165–198 (KSCP…NSNE). The span at 32 to 41 (SAKTVDTVTD) shows a compositional bias: polar residues. A compositionally biased stretch (basic and acidic residues) spans 55–71 (AEKERRKYLQARVRAEG). Polar residues-rich tracts occupy residues 73 to 84 (SASTSSKSNATR) and 132 to 141 (RSQGLEQTSP). Ser-133 is subject to Phosphoserine. Phosphothreonine is present on Thr-139. A Phosphoserine modification is found at Ser-140. The 140-residue stretch at 315–454 (NPSTYLLGLR…NLLETLMPIV (140 aa)) folds into the JmjC domain. Positions 355, 357, and 420 each coordinate Fe cation.

Belongs to the ROX family. NO66 subfamily. Fe(2+) is required as a cofactor.

The protein resides in the nucleus. It catalyses the reaction N(6),N(6)-dimethyl-L-lysyl(36)-[histone H3] + 2 2-oxoglutarate + 2 O2 = L-lysyl(36)-[histone H3] + 2 formaldehyde + 2 succinate + 2 CO2. In terms of biological role, oxygenase that can act as both a histone lysine demethylase and a ribosomal histidine hydroxylase. Specifically demethylates 'Lys-4' (H3K4me) and 'Lys-36' (H3K36me) of histone H3, thereby playing a central role in histone code. This is Bifunctional lysine-specific demethylase and histidyl-hydroxylase NO66 from Drosophila erecta (Fruit fly).